Here is a 75-residue protein sequence, read N- to C-terminus: Calhepatin (75 aa).

N-acetylserine is present on Ser-1. 2 consecutive EF-hand domains span residues 2–37 and 38–73; these read ADEQKLRERFEALDKDKSGTLSVDELYEGVHAVHPK and VSRNDIVKIIEKVDTNKDGQVSWQEFIEAFKRLADL. Positions 15, 17, 19, 21, 26, 51, 53, 55, 57, and 62 each coordinate Ca(2+).

In terms of assembly, monomer and homodimer. Liver, and to a much lower level intestine.

Its function is as follows. Binds both calcium and copper, but not zinc. May be involved in calcium signal transduction. In Lepidosiren paradoxus (South American lungfish), this protein is Calhepatin.